Here is a 328-residue protein sequence, read N- to C-terminus: Malate dehydrogenase (328 aa).

11 to 17 (GAAGQIG) contacts NAD(+). The substrate site is built by arginine 94 and arginine 100. Residues asparagine 107, glutamine 114, and 131–133 (VGN) contribute to the NAD(+) site. Residues asparagine 133 and arginine 164 each contribute to the substrate site. Catalysis depends on histidine 189, which acts as the Proton acceptor.

It belongs to the LDH/MDH superfamily. MDH type 2 family.

It catalyses the reaction (S)-malate + NAD(+) = oxaloacetate + NADH + H(+). Catalyzes the reversible oxidation of malate to oxaloacetate. This Xylella fastidiosa (strain M12) protein is Malate dehydrogenase.